Consider the following 317-residue polypeptide: tRNA(Met) cytidine acetate ligase (317 aa).

ATP-binding positions include 6 to 19 (IAEY…HIYQ), glycine 100, asparagine 157, and arginine 182.

This sequence belongs to the TmcAL family.

Its subcellular location is the cytoplasm. The enzyme catalyses cytidine(34) in elongator tRNA(Met) + acetate + ATP = N(4)-acetylcytidine(34) in elongator tRNA(Met) + AMP + diphosphate. In terms of biological role, catalyzes the formation of N(4)-acetylcytidine (ac(4)C) at the wobble position of elongator tRNA(Met), using acetate and ATP as substrates. First activates an acetate ion to form acetyladenylate (Ac-AMP) and then transfers the acetyl group to tRNA to form ac(4)C34. The sequence is that of tRNA(Met) cytidine acetate ligase from Mesomycoplasma hyopneumoniae (strain J / ATCC 25934 / NCTC 10110) (Mycoplasma hyopneumoniae).